We begin with the raw amino-acid sequence, 331 residues long: GTP 3',8-cyclase (331 aa).

The Radical SAM core domain occupies 1–231 (MNAVDYLRIS…DGQVQGNGPA (231 aa)). Arginine 8 lines the GTP pocket. Positions 15 and 19 each coordinate [4Fe-4S] cluster. Position 21 (tyrosine 21) interacts with S-adenosyl-L-methionine. Residue cysteine 22 coordinates [4Fe-4S] cluster. Arginine 60 lines the GTP pocket. Glycine 64 lines the S-adenosyl-L-methionine pocket. Threonine 91 lines the GTP pocket. Serine 115 contributes to the S-adenosyl-L-methionine binding site. Residue lysine 157 coordinates GTP. Methionine 191 contributes to the S-adenosyl-L-methionine binding site. The [4Fe-4S] cluster site is built by cysteine 254 and cysteine 257. 259 to 261 (RMR) lines the GTP pocket. Cysteine 271 lines the [4Fe-4S] cluster pocket.

The protein belongs to the radical SAM superfamily. MoaA family. In terms of assembly, monomer and homodimer. The cofactor is [4Fe-4S] cluster.

It carries out the reaction GTP + AH2 + S-adenosyl-L-methionine = (8S)-3',8-cyclo-7,8-dihydroguanosine 5'-triphosphate + 5'-deoxyadenosine + L-methionine + A + H(+). Its pathway is cofactor biosynthesis; molybdopterin biosynthesis. Catalyzes the cyclization of GTP to (8S)-3',8-cyclo-7,8-dihydroguanosine 5'-triphosphate. The protein is GTP 3',8-cyclase of Acaryochloris marina (strain MBIC 11017).